The sequence spans 173 residues: Calmodulin-like protein 11 (173 aa).

Over residues 1-26 (MEEIQQQQQQQQQQQQQQQQQQQQQQ) the composition is skewed to low complexity. Residues 1 to 27 (MEEIQQQQQQQQQQQQQQQQQQQQQQE) are disordered. EF-hand domains follow at residues 31 to 66 (EQIMEFKEAFCLFDKDGDGCITADELATVIRSLDQN), 67 to 102 (PTEQELQDMITEIDSDGNGTIEFSEFLNLMANQLQE), 104 to 139 (DADEELKEAFKVFDKDQNGYISASELRHVMINLGEK), and 140 to 173 (LTDEEVDQMIKEADLDGDGQVNYDEFVRMMMING). 20 residues coordinate Ca(2+): Asp-44, Asp-46, Asp-48, Cys-50, Glu-55, Asp-80, Asp-82, Asn-84, Thr-86, Glu-91, Asp-117, Asp-119, Asn-121, Tyr-123, Glu-128, Asp-153, Asp-155, Asp-157, Gln-159, and Glu-164.

Belongs to the calmodulin family.

In terms of biological role, potential calcium sensor. In Arabidopsis thaliana (Mouse-ear cress), this protein is Calmodulin-like protein 11 (CML11).